Consider the following 88-residue polypeptide: Small ribosomal subunit protein uS15 (88 aa).

The protein belongs to the universal ribosomal protein uS15 family. As to quaternary structure, part of the 30S ribosomal subunit. Forms a bridge to the 50S subunit in the 70S ribosome, contacting the 23S rRNA.

Functionally, one of the primary rRNA binding proteins, it binds directly to 16S rRNA where it helps nucleate assembly of the platform of the 30S subunit by binding and bridging several RNA helices of the 16S rRNA. Its function is as follows. Forms an intersubunit bridge (bridge B4) with the 23S rRNA of the 50S subunit in the ribosome. This is Small ribosomal subunit protein uS15 from Geotalea uraniireducens (strain Rf4) (Geobacter uraniireducens).